Consider the following 351-residue polypeptide: MSEHDRELVSPEAALDDHAVESALRPRTLDEFVGQDRVREQLSLVLRSAQQRGTAPDHILMSGGPGLGKTTLAMIIAAELGAPLRITSGPAIERSGDLAAVLSTLREGEVLFLDEIHRMARPAEEMLYVAMEDFRVDVMVGKGPGATAIPLEIAPFTLVGATTRAGMLPAPLRDRFGFVAHMDFYSPEELELILHRSARLLGIELLDDAAAEIARRSRGTPRIANRLLRRVRDYAQVRGDGRLTLECARAALSLYEVDDEGLDRLDRAVLDALLRRFRGGPVGLSTLAVSVGEEPETVEIVAEPFLVRAGFIARTPRGRVATPQAWAHMGLTPPPDAAFGAAALFDPDEEP.

The interval 4–185 (HDRELVSPEA…FGFVAHMDFY (182 aa)) is large ATPase domain (RuvB-L). Residues leucine 24, arginine 25, glycine 66, lysine 69, threonine 70, threonine 71, 132–134 (EDF), arginine 175, tyrosine 185, and arginine 222 each bind ATP. Mg(2+) is bound at residue threonine 70. The tract at residues 186–256 (SPEELELILH…CARAALSLYE (71 aa)) is small ATPAse domain (RuvB-S). Residues 259-351 (DEGLDRLDRA…AALFDPDEEP (93 aa)) are head domain (RuvB-H). DNA is bound by residues arginine 314 and arginine 319.

This sequence belongs to the RuvB family. In terms of assembly, homohexamer. Forms an RuvA(8)-RuvB(12)-Holliday junction (HJ) complex. HJ DNA is sandwiched between 2 RuvA tetramers; dsDNA enters through RuvA and exits via RuvB. An RuvB hexamer assembles on each DNA strand where it exits the tetramer. Each RuvB hexamer is contacted by two RuvA subunits (via domain III) on 2 adjacent RuvB subunits; this complex drives branch migration. In the full resolvosome a probable DNA-RuvA(4)-RuvB(12)-RuvC(2) complex forms which resolves the HJ.

It localises to the cytoplasm. It catalyses the reaction ATP + H2O = ADP + phosphate + H(+). The RuvA-RuvB-RuvC complex processes Holliday junction (HJ) DNA during genetic recombination and DNA repair, while the RuvA-RuvB complex plays an important role in the rescue of blocked DNA replication forks via replication fork reversal (RFR). RuvA specifically binds to HJ cruciform DNA, conferring on it an open structure. The RuvB hexamer acts as an ATP-dependent pump, pulling dsDNA into and through the RuvAB complex. RuvB forms 2 homohexamers on either side of HJ DNA bound by 1 or 2 RuvA tetramers; 4 subunits per hexamer contact DNA at a time. Coordinated motions by a converter formed by DNA-disengaged RuvB subunits stimulates ATP hydrolysis and nucleotide exchange. Immobilization of the converter enables RuvB to convert the ATP-contained energy into a lever motion, pulling 2 nucleotides of DNA out of the RuvA tetramer per ATP hydrolyzed, thus driving DNA branch migration. The RuvB motors rotate together with the DNA substrate, which together with the progressing nucleotide cycle form the mechanistic basis for DNA recombination by continuous HJ branch migration. Branch migration allows RuvC to scan DNA until it finds its consensus sequence, where it cleaves and resolves cruciform DNA. The protein is Holliday junction branch migration complex subunit RuvB of Thermobifida fusca (strain YX).